The primary structure comprises 314 residues: Zinc-binding alcohol dehydrogenase domain-containing protein cipB (314 aa).

It belongs to the zinc-containing alcohol dehydrogenase family.

Its function is as follows. Involved in osmoadaptation. The chain is Zinc-binding alcohol dehydrogenase domain-containing protein cipB (cipB) from Emericella nidulans (strain FGSC A4 / ATCC 38163 / CBS 112.46 / NRRL 194 / M139) (Aspergillus nidulans).